A 515-amino-acid chain; its full sequence is E3 ubiquitin-protein ligase RNF38 (515 aa).

The Bipartite nuclear localization signal 1 motif lies at 57 to 71 (DSPSPKRQRLSHSVF). Positions 73 to 141 (YTSASPAPSP…LSRHNSISQD (69 aa)) are disordered. The segment covering 89–104 (MTSNRQPPSVRPSQHH) has biased composition (polar residues). The Bipartite nuclear localization signal 2 signature appears at 115 to 131 (RNRRSPPVRRQRGRRDR). The span at 115–134 (RNRRSPPVRRQRGRRDRLSR) shows a compositional bias: basic residues. An RING-type zinc finger spans residues 463-504 (CVVCMCDFESRQLLRVLPCNHEFHAKCVDKWLKANRTCPICR).

In terms of tissue distribution, widely expressed with highest levels in testis.

It localises to the nucleus. It catalyses the reaction S-ubiquitinyl-[E2 ubiquitin-conjugating enzyme]-L-cysteine + [acceptor protein]-L-lysine = [E2 ubiquitin-conjugating enzyme]-L-cysteine + N(6)-ubiquitinyl-[acceptor protein]-L-lysine.. It functions in the pathway protein modification; protein ubiquitination. Acts as an E3 ubiquitin-protein ligase able to ubiquitinate p53/TP53 which promotes its relocalization to discrete foci associated with PML nuclear bodies. Exhibits preference for UBE2D2 as a E2 enzyme. The chain is E3 ubiquitin-protein ligase RNF38 from Homo sapiens (Human).